The sequence spans 697 residues: Sodium-dependent phosphate transport protein 2B (697 aa).

A disordered region spans residues 1–45 (MAPWPELENAQPNPGKFIEGASGPQSSIPAKDKEASKTNDNGTPV). The Cytoplasmic portion of the chain corresponds to 1 to 91 (MAPWPELENA…WSERDTKGKT (91 aa)). A helical membrane pass occupies residues 92 to 112 (LCIFQGVGKFILLLGFLYLFV). At 113–136 (CSLDVLSSAFQLVGGKVAGQFFSN) the chain is on the extracellular side. The chain crosses the membrane as a helical span at residues 137–157 (NSIMSNPVAGLVIGVLVTVMV). At 158-213 (QSSSTSSSIIVSMVASSLLTVRAAIPIIMGANIGTSITNTIVALMQAGDRNEFRRA) the chain is on the cytoplasmic side. Residues 214–234 (FAGATVHDFFNWLSVFVLLPL) traverse the membrane as a helical segment. Over 235–363 (EAATHYLEIL…FVNFSLPDLA (129 aa)) the chain is Extracellular. N-linked (GlcNAc...) asparagine glycans are attached at residues Asn295, Asn308, Asn321, and Asn356. Cys303 and Cys350 are joined by a disulfide. Residues 364 to 384 (VGIILLTVSLVVLCGCLIMIV) traverse the membrane as a helical segment. Residues 385-408 (KLLGSVLRGQVATVIKKTLNTDFP) lie on the Cytoplasmic side of the membrane. A helical membrane pass occupies residues 409-429 (FPFAWLTGYLAILVGAGMTFI). The Extracellular portion of the chain corresponds to 430–486 (VQSSSVFTSAMTPLIGIGVISIERAYPLTLGSNIGTTTTAILAALASPGNTLRSSLQ). The chain crosses the membrane as a helical span at residues 487 to 507 (IALCHFFFNISGILLWYPIPF). Residues 508-526 (TRLPIRLAKGLGNISAKYR) lie on the Cytoplasmic side of the membrane. The helical transmembrane segment at 527–547 (WFAVFYLIFFFFVTPLTVFGL) threads the bilayer. Residues 548–551 (SLAG) are Extracellular-facing. The helical transmembrane segment at 552 to 572 (WPVLVGVGVPIILLLLLVLCL) threads the bilayer. Topologically, residues 573–696 (RMLQFRCPRI…SMKALSNTTV (124 aa)) are cytoplasmic.

Belongs to the SLC34A transporter family. Highly abundant in the ileum of small intestine, whereas it is almost absent in the duodenum and in the jejunum.

Its subcellular location is the apical cell membrane. The enzyme catalyses 3 Na(+)(out) + phosphate(out) = 3 Na(+)(in) + phosphate(in). Involved in actively transporting phosphate into cells via Na(+) cotransport. The chain is Sodium-dependent phosphate transport protein 2B (Slc34a2) from Mus musculus (Mouse).